A 443-amino-acid polypeptide reads, in one-letter code: UDP-N-acetylmuramoylalanine--D-glutamate ligase (443 aa).

116–122 (GTNGKST) serves as a coordination point for ATP.

Belongs to the MurCDEF family.

It localises to the cytoplasm. The catalysed reaction is UDP-N-acetyl-alpha-D-muramoyl-L-alanine + D-glutamate + ATP = UDP-N-acetyl-alpha-D-muramoyl-L-alanyl-D-glutamate + ADP + phosphate + H(+). Its pathway is cell wall biogenesis; peptidoglycan biosynthesis. Cell wall formation. Catalyzes the addition of glutamate to the nucleotide precursor UDP-N-acetylmuramoyl-L-alanine (UMA). This Novosphingobium aromaticivorans (strain ATCC 700278 / DSM 12444 / CCUG 56034 / CIP 105152 / NBRC 16084 / F199) protein is UDP-N-acetylmuramoylalanine--D-glutamate ligase.